A 315-amino-acid chain; its full sequence is 4-diphosphocytidyl-2-C-methyl-D-erythritol kinase (315 aa).

Lysine 10 is an active-site residue. ATP is bound at residue 107-117 (PVAGGMAGGSA). The active site involves aspartate 148. A disordered region spans residues 292-315 (HPATSPVPGPAKNRGAHIVSIESE).

It belongs to the GHMP kinase family. IspE subfamily.

The catalysed reaction is 4-CDP-2-C-methyl-D-erythritol + ATP = 4-CDP-2-C-methyl-D-erythritol 2-phosphate + ADP + H(+). The protein operates within isoprenoid biosynthesis; isopentenyl diphosphate biosynthesis via DXP pathway; isopentenyl diphosphate from 1-deoxy-D-xylulose 5-phosphate: step 3/6. In terms of biological role, catalyzes the phosphorylation of the position 2 hydroxy group of 4-diphosphocytidyl-2C-methyl-D-erythritol. The polypeptide is 4-diphosphocytidyl-2-C-methyl-D-erythritol kinase (Corynebacterium efficiens (strain DSM 44549 / YS-314 / AJ 12310 / JCM 11189 / NBRC 100395)).